We begin with the raw amino-acid sequence, 204 residues long: Cobalt-containing nitrile hydratase subunit alpha (204 aa).

Positions 108, 111, 112, and 113 each coordinate Co(2+). At C111 the chain carries Cysteine sulfinic acid (-SO2H). The residue at position 113 (C113) is a Cysteine sulfenic acid (-SOH).

Belongs to the nitrile hydratase subunit alpha family. As to quaternary structure, heterotetramer of two alpha and two beta chains. Co(2+) is required as a cofactor.

It carries out the reaction an aliphatic primary amide = an aliphatic nitrile + H2O. In terms of biological role, NHase catalyzes the hydration of various nitrile compounds to the corresponding amides. The protein is Cobalt-containing nitrile hydratase subunit alpha of Pseudonocardia thermophila.